We begin with the raw amino-acid sequence, 209 residues long: tRNA(Phe) 7-((3-amino-3-carboxypropyl)-4-demethylwyosine(37)-N(4))-methyltransferase (209 aa).

Belongs to the TYW3 family.

The catalysed reaction is 4-demethyl-7-[(3S)-3-amino-3-carboxypropyl]wyosine(37) in tRNA(Phe) + S-adenosyl-L-methionine = 7-[(3S)-3-amino-3-carboxypropyl]wyosine(37) in tRNA(Phe) + S-adenosyl-L-homocysteine + H(+). In terms of biological role, S-adenosyl-L-methionine-dependent methyltransferase that acts as a component of the wyosine derivatives biosynthesis pathway. Probably methylates N-4 position of wybutosine-86 to produce wybutosine-72. The polypeptide is tRNA(Phe) 7-((3-amino-3-carboxypropyl)-4-demethylwyosine(37)-N(4))-methyltransferase (Saccharolobus solfataricus (strain ATCC 35092 / DSM 1617 / JCM 11322 / P2) (Sulfolobus solfataricus)).